The primary structure comprises 267 residues: Apolipoprotein A-I (267 aa).

An N-terminal signal peptide occupies residues 1–18 (MKAAVLTLAVLFLTGSQA). A run of 2 repeats spans residues 68–89 (LKLLDNWDSLTSTVNKLREDLG) and 90–111 (PVTQEFWDNLEKETGWLRQEMS). Residues 68–267 (LKLLDNWDSL…EEYAKKLSSQ (200 aa)) are 10 X approximate tandem repeats. At methionine 110 the chain carries Methionine sulfoxide. One copy of the 3; half-length repeat lies at 112 to 122 (KDLEEVKAKVQ). Tandem repeats lie at residues 123–144 (PYLDDFQKKWQEEVKLYSQKLE), 145–166 (PLRTEFQEGALQKLQDLQEKLS), 167–188 (PLAEQVRDRARAHVDTLRTQLA), 189–210 (PYSDELRQRLATRLEVLKESGG), and 211–232 (ASLAEYHAKASEHLSALGEKAK). A 9; half-length repeat occupies 233-243 (PALEDLRQGLL). Repeat 10 spans residues 244–267 (PVLESFKVSFLSALEEYAKKLSSQ).

This sequence belongs to the apolipoprotein A1/A4/E family. In terms of assembly, homodimer. Interacts with APOA1BP and CLU. Component of a sperm activating protein complex (SPAP), consisting of APOA1, an immunoglobulin heavy chain, an immunoglobulin light chain and albumin. Interacts with NDRG1. Interacts with SCGB3A2. Interacts with NAXE and YJEFN3. Post-translationally, glycosylated. Palmitoylated. In terms of processing, phosphorylation sites are present in the extracellular medium.

It localises to the secreted. Its function is as follows. Participates in the reverse transport of cholesterol from tissues to the liver for excretion by promoting cholesterol efflux from tissues and by acting as a cofactor for the lecithin cholesterol acyltransferase (LCAT). As part of the SPAP complex, activates spermatozoa motility. This is Apolipoprotein A-I (APOA1) from Cebus imitator (Panamanian white-faced capuchin).